The following is a 567-amino-acid chain: Signal transducer and activator of transcription b (567 aa).

Residues W449–R548 enclose the SH2 domain.

Belongs to the transcription factor STAT family. As to quaternary structure, may interact with sodium-dependent transporter snf-12; the interaction is probably direct.

It localises to the cytoplasm. Its subcellular location is the nucleus. The protein resides in the vesicle. Functionally, carries out a dual function: signal transduction and activation of transcription. Required, in concert with transcription factor elt-3, for up-regulation of the vacuolar H(+)-ATPase and acceleration of lysosome maturation at molt. As part of the innate immune response to molting and injury of the adult epidermis, positively regulates the expression of epidermal antimicrobial peptides, such as nlp-29. Through positively modulating the expression of epidermal antimicrobial peptides, such as nlp-29, plays a role in resistance to fungal infection and in the response to physical wounding and phorbol ester PMA treatment. Functions cell autonomously in the epidermis, in concert with sodium-dependent transporter snf-12, probably acting at vesicular membranes, downstream of a p38 MAPK/pmk-1 pathway. This is Signal transducer and activator of transcription b from Caenorhabditis elegans.